The chain runs to 220 residues: Fructose-6-phosphate aldolase (220 aa).

The active-site Schiff-base intermediate with substrate is lysine 85.

It belongs to the transaldolase family. Type 3A subfamily. Homodecamer.

The protein resides in the cytoplasm. The enzyme catalyses beta-D-fructose 6-phosphate = dihydroxyacetone + D-glyceraldehyde 3-phosphate. Functionally, catalyzes the reversible formation of fructose 6-phosphate from dihydroxyacetone and D-glyceraldehyde 3-phosphate via an aldolization reaction. This Enterobacter sp. (strain 638) protein is Fructose-6-phosphate aldolase.